The following is a 278-amino-acid chain: Energy-coupling factor transporter ATP-binding protein EcfA (278 aa).

The region spanning 5 to 240 (LETKNLVYNY…KEVIDEADLR (236 aa)) is the ABC transporter domain. 38-45 (GHNGAGKS) lines the ATP pocket.

The protein belongs to the ABC transporter superfamily. Energy-coupling factor EcfA family. As to quaternary structure, forms a stable energy-coupling factor (ECF) transporter complex composed of 2 membrane-embedded substrate-binding proteins (S component), 2 ATP-binding proteins (A component) and 2 transmembrane proteins (T component).

Its subcellular location is the cell membrane. Functionally, ATP-binding (A) component of a common energy-coupling factor (ECF) ABC-transporter complex. Unlike classic ABC transporters this ECF transporter provides the energy necessary to transport a number of different substrates. The polypeptide is Energy-coupling factor transporter ATP-binding protein EcfA (Methanosphaera stadtmanae (strain ATCC 43021 / DSM 3091 / JCM 11832 / MCB-3)).